Reading from the N-terminus, the 89-residue chain is FMRFamide-like neuropeptides 19 (89 aa).

The signal sequence occupies residues 1–20; that stretch reads MSFQLTLFSMLFLLIAVVVG. Positions 21–67 are excised as a propeptide; sequence QPIQSQNGDLKMQAVQDNSPLNMEAFNDDSALYDYLEQSDPSLKSME. Phe-76 bears the Phenylalanine amide mark. A propeptide spanning residues 80–89 is cleaved from the precursor; sequence ASWASSVRFG.

Belongs to the FARP (FMRFamide related peptide) family. Each flp gene is expressed in a distinct set of neurons. Flp-19 is expressed in the URX interneurons, the serotonin and acetylcholine-expressing HSN neurons, and the AIN, AWA and BAG neurons.

It is found in the secreted. In terms of biological role, FMRFamides and FMRFamide-like peptides are neuropeptides. WANQVRF-amide inhibits the activity of dissected pharyngeal myogenic muscle system. This Caenorhabditis elegans protein is FMRFamide-like neuropeptides 19.